The primary structure comprises 320 residues: Epoxidase atD (320 aa).

N-linked (GlcNAc...) asparagine glycans are attached at residues Asn245 and Asn299.

It functions in the pathway secondary metabolite biosynthesis. In terms of biological role, epoxidase; part of the gene cluster that mediates the biosynthesis of terreic acid, a quinone epoxide inhibitor of Bruton's tyrosine kinase. The first step of the pathway is the synthesis of 6-methylsalicylic acid (6-MSA) by the 6-methylsalicylic acid synthase atX. In the biosynthesis of 6-MSA, atX utilizes one acetyl-CoA and three malonyl-CoAs as its substrates and catalyzes a series of programmed reactions including Claisen condensation, reduction, aldol cyclization, and the hydrolytic cleavage that yields 6-MSA. The 6-methylsalicylate 1-monooxygenase atA then catalyzes the decarboxylative hydroxylation of 6-MSA to 3-methylcatechol. The next step is the conversion of 3-methylcatechol to 3-methyl-1,2,4-benzenetriol by cytochrome P450 monooxygenase atE, which is enhanced by cytochrome P450 monooxygenase atG. Then, the epoxidase atD catalyzes the epoxidation and hydroxyl oxidation of 3-methyl-1,2,4-benzenetriol to terremutin. Lastly, GMC oxidoreductase atC oxidizes terremutin to terreic acid. This chain is Epoxidase atD, found in Aspergillus terreus (strain NIH 2624 / FGSC A1156).